Here is a 933-residue protein sequence, read N- to C-terminus: Progesterone receptor (933 aa).

The AF3; mediates transcriptional activation stretch occupies residues 1 to 164 (MTELKAKGPR…PATQGVLSPL (164 aa)). The disordered stretch occupies residues 1-256 (MTELKAKGPR…AAAGGGAAAV (256 aa)). The modulating, Pro-Rich stretch occupies residues 1 to 566 (MTELKAKGPR…YSFESLPQKI (566 aa)). Residue S20 is modified to Phosphoserine. The short motif at 55–59 (LDGLL) is the LXXL motif 1 element. Phosphoserine is present on S81. The LXXL motif 2 motif lies at 115-119 (LDTLL). S130 and S162 each carry phosphoserine. Residues 165 to 305 (MSRSGCKAGD…LATTMMDFIH (141 aa)) form a mediates transcriptional transrepression region. Residues 183 to 187 (KVLPR) carry the Nuclear localization signal motif. S190 and S213 each carry phosphoserine. Residues 220-231 (EVEEEDGSESEE) show a composition bias toward acidic residues. The span at 232-246 (SAGPLLKGKPRALGG) shows a compositional bias: low complexity. S294 is subject to Phosphoserine; by MAPK1. A compositionally biased stretch (low complexity) spans 335–356 (AXSAFAPPRSSPSASSTPVAVG). The interval 335–378 (AXSAFAPPRSSPSASSTPVAVGDFPDCAYPPDAEPKDDAYPLYS) is disordered. At S345 the chain carries Phosphoserine; by MAPK. A Glycyl lysine isopeptide (Lys-Gly) (interchain with G-Cter in SUMO); alternate cross-link involves residue K388. K388 is covalently cross-linked (Glycyl lysine isopeptide (Lys-Gly) (interchain with G-Cter in ubiquitin); alternate). S400 bears the Phosphoserine; by CDK2 mark. Residues 415–452 (PDFPLGPPPPLPPRAPPSRPGEAAVTAAPASASVSSAS) are disordered. Pro residues predominate over residues 418–433 (PLGPPPPLPPRAPPSR). Positions 434–452 (PGEAAVTAAPASASVSSAS) are enriched in low complexity. Residues 456–546 (STLECILYKA…VYPPYLNYLR (91 aa)) form an AF1; mediates transcriptional activation region. A Glycyl lysine isopeptide (Lys-Gly) (interchain with G-Cter in SUMO) cross-link involves residue K531. NR C4-type zinc fingers lie at residues 567-587 (CLICGDEASGCHYGVLTCGSC) and 603-627 (CAGRNDCIVDKIRRKNCPACRLRKC). The nuclear receptor DNA-binding region spans 567–639 (CLICGDEASG…AGMVLGGRKF (73 aa)). Residue S676 is modified to Phosphoserine. Positions 679-913 (QDIQLIPPLI…EFPEMMSEVI (235 aa)) constitute an NR LBD domain. The AF2; mediates transcriptional activation stretch occupies residues 687 to 933 (LINLLMSIEP…MVKPLLFHKK (247 aa)). R766 lines the progesterone pocket.

It belongs to the nuclear hormone receptor family. Interacts with SMARD1 and UNC45A. Interacts with CUEDC2; the interaction promotes ubiquitination, decreases sumoylation, and represses transcriptional activity. Interacts with PIAS3; the interaction promotes sumoylation of PR in a hormone-dependent manner, inhibits DNA-binding, and alters nuclear export. Interacts with SP1; the interaction requires ligand-induced phosphorylation on Ser-345 by ERK1/2-MAPK. Interacts with PRMT2. Interacts with NCOA2 and NCOA1. Interacts with KLF9. Interacts with GTF2B. In terms of processing, phosphorylated on multiple serine sites. Several of these sites are hormone-dependent. Phosphorylation on Ser-294 is highly hormone-dependent and modulates ubiquitination and sumoylation on Lys-388. Phosphorylation on Ser-102 and Ser-345 requires induction by hormone. Basal phosphorylation on Ser-81, Ser-162, Ser-190 and Ser-400 is increased in response to progesterone and can be phosphorylated in vitro by the CDK2-A1 complex. Increased levels of phosphorylation on Ser-400 also in the presence of EGF, heregulin, IGF, PMA and FBS. Phosphorylation at this site by CDK2 is ligand-independent, and increases nuclear translocation and transcriptional activity. Phosphorylation at Ser-162 and Ser-294, but not at Ser-190, is impaired during the G(2)/M phase of the cell cycle. Phosphorylation on Ser-345 by ERK1/2 MAPK is required for interaction with SP1. Post-translationally, sumoylation is hormone-dependent and represses transcriptional activity. Sumoylation on all three sites is enhanced by PIAS3. Desumoylated by SENP1. Sumoylation on Lys-388, the main site of sumoylation, is repressed by ubiquitination on the same site, and modulated by phosphorylation at Ser-294. Ubiquitination is hormone-dependent and represses sumoylation on the same site. Promoted by MAPK-mediated phosphorylation on Ser-294. Ubiquitinated by UBR5, leading to its degradation: UBR5 specifically recognizes and binds ligand-bound PGR when it is not associated with coactivators (NCOAs). In presence of NCOAs, the UBR5-degron is not accessible, preventing its ubiquitination and degradation. In terms of processing, palmitoylated by ZDHHC7 and ZDHHC21. Palmitoylation is required for plasma membrane targeting and for rapid intracellular signaling via ERK and AKT kinases and cAMP generation.

The protein localises to the nucleus. The protein resides in the cytoplasm. Functionally, the steroid hormones and their receptors are involved in the regulation of eukaryotic gene expression and affect cellular proliferation and differentiation in target tissues. Transcriptional activator of several progesteron-dependent promoters in a variety of cell types. Involved in activation of SRC-dependent MAPK signaling on hormone stimulation. The sequence is that of Progesterone receptor (PGR) from Pan troglodytes (Chimpanzee).